We begin with the raw amino-acid sequence, 335 residues long: MGYISMNSTNLIRPYEGTELNDAGRKYKKIGERLLREKKLGVVILSGGQGTRLGSDEPKGLFKIKGKTLFEWHMETIKELISKYNADIAVFIMTSSFTDEAVRKYFQSTDFGLKIQFFKQRNSLCVGTDGKPLEWYDGHAESPYGNGDIFNAIQQVNLEGIEALNVICIDNVLAKILDPVFVGAFYSDDYDILSKSVTKEEKESVGAFLMDERLKIKEYSENDAKGEGIQGNICNHIFKTSFIKKMKNINLPEHKAFKKIPYTISGKLIKPVKPNGFKKETFIFDSFEYTQKNGVMNVPREKEFSPLKNGMDSSVDNPVTCTIAVERHRIKTTIQ.

The short motif at 45-48 (LSGG) is the Substrate binding element. UTP contacts are provided by residues 45–48 (LSGG), Lys-59, Gln-120, and Gly-145. Residue Asn-146 participates in substrate binding. Asp-170 is a binding site for UTP. Positions 218–219 (EY) match the Substrate binding motif. Position 278 (Lys-278) interacts with UTP. Lys-308 contributes to the substrate binding site.

Belongs to the UDPGP type 1 family.

Its subcellular location is the cytoplasm. It carries out the reaction N-acetyl-alpha-D-glucosamine 1-phosphate + UTP + H(+) = UDP-N-acetyl-alpha-D-glucosamine + diphosphate. The protein operates within nucleotide-sugar biosynthesis; UDP-N-acetyl-alpha-D-glucosamine biosynthesis; UDP-N-acetyl-alpha-D-glucosamine from N-acetyl-alpha-D-glucosamine 1-phosphate: step 1/1. The chain is Probable UDP-N-acetylglucosamine pyrophosphorylase (UAP1) from Encephalitozoon cuniculi (strain GB-M1) (Microsporidian parasite).